The sequence spans 122 residues: Large ribosomal subunit protein uL14 (122 aa).

The protein belongs to the universal ribosomal protein uL14 family. In terms of assembly, part of the 50S ribosomal subunit. Forms a cluster with proteins L3 and L19. In the 70S ribosome, L14 and L19 interact and together make contacts with the 16S rRNA in bridges B5 and B8.

In terms of biological role, binds to 23S rRNA. Forms part of two intersubunit bridges in the 70S ribosome. This Janthinobacterium sp. (strain Marseille) (Minibacterium massiliensis) protein is Large ribosomal subunit protein uL14.